The following is a 217-amino-acid chain: Probable transaldolase (217 aa).

Lysine 83 acts as the Schiff-base intermediate with substrate in catalysis.

It belongs to the transaldolase family. Type 3B subfamily.

Its subcellular location is the cytoplasm. It carries out the reaction D-sedoheptulose 7-phosphate + D-glyceraldehyde 3-phosphate = D-erythrose 4-phosphate + beta-D-fructose 6-phosphate. It participates in carbohydrate degradation; pentose phosphate pathway; D-glyceraldehyde 3-phosphate and beta-D-fructose 6-phosphate from D-ribose 5-phosphate and D-xylulose 5-phosphate (non-oxidative stage): step 2/3. Its function is as follows. Transaldolase is important for the balance of metabolites in the pentose-phosphate pathway. In Brucella anthropi (strain ATCC 49188 / DSM 6882 / CCUG 24695 / JCM 21032 / LMG 3331 / NBRC 15819 / NCTC 12168 / Alc 37) (Ochrobactrum anthropi), this protein is Probable transaldolase.